A 257-amino-acid polypeptide reads, in one-letter code: GTP cyclohydrolase FolE2 (257 aa).

It belongs to the GTP cyclohydrolase IV family.

The enzyme catalyses GTP + H2O = 7,8-dihydroneopterin 3'-triphosphate + formate + H(+). The protein operates within cofactor biosynthesis; 7,8-dihydroneopterin triphosphate biosynthesis; 7,8-dihydroneopterin triphosphate from GTP: step 1/1. Converts GTP to 7,8-dihydroneopterin triphosphate. The sequence is that of GTP cyclohydrolase FolE2 from Kosmotoga olearia (strain ATCC BAA-1733 / DSM 21960 / TBF 19.5.1).